Here is an 874-residue protein sequence, read N- to C-terminus: Probable RNA-directed RNA polymerase (874 aa).

The protein belongs to the totiviridae RNA-directed RNA polymerase family.

It catalyses the reaction RNA(n) + a ribonucleoside 5'-triphosphate = RNA(n+1) + diphosphate. RNA-dependent RNA polymerase which replicates the viral genome. Catalyzes the transcription of fully conservative plus-strand genomic RNAs that are extruded from the virion into the cytoplasm where they function as mRNAs for translation of viral proteins and also as substrates for encapsidation to form new virions. Once encapsidated, the positive strand is converted to dsRNA by the RNA-directed RNA polymerase. Displays ssRNA-binding activity. The polypeptide is Probable RNA-directed RNA polymerase (ORF3) (Leishmania major (LRV-1-1)).